We begin with the raw amino-acid sequence, 561 residues long: MSEVKSDIQIAREAKMQPINDILAKINVPDESSAFSPMGRHIAKINLEYLDTLKDKPNGKLVLVTAITPTPAGEGKTTTSVGLNDGLNKIGKKSIVCLREPSLGPSFGMKGGAAGGGYAQVVPMEQINLHFTGDFHAITSAHNLLSALIDNHIYWGNKLDIDVRRIVWKRVMDMNDRSLRSININLGGVANGFPREDGFDITVASEIMAIFCLSNDLEDLEKRIGNITIAYTRDKKPVYAKDLKAQGPMTVLLKDAIRPNVTQTLENNPAIIHGGPFANIAHGCNSVIATKTGLKLADYVVTEAGFGADLGAEKFLDIKCRKSDLKPSCVVIVATIRALKMHGGVAKDDLKTENVEALKKGLVNLQRHVENVKKFGLPVAVAVNHFIKDTENEVKALIEFCDTIGVKASLCTHWANGGEGTKELASHVAELCEKNEDKFKFLYESKTPLFKKIETIAKEIYRADEVIADTKIRDQLKSFEDAGYGDFPICIAKTQYSFSTDPSLKGAPTGHSLPIREIKLSSGAEFIVVICGAVMTMPGLPRVPAADSIKLNKDGEIEGLF.

70 to 77 (TPAGEGKT) is an ATP binding site.

This sequence belongs to the formate--tetrahydrofolate ligase family.

The catalysed reaction is (6S)-5,6,7,8-tetrahydrofolate + formate + ATP = (6R)-10-formyltetrahydrofolate + ADP + phosphate. Its pathway is one-carbon metabolism; tetrahydrofolate interconversion. This Pelagibacter ubique (strain HTCC1062) protein is Formate--tetrahydrofolate ligase.